The following is a 510-amino-acid chain: DNA-directed RNA polymerase I subunit RPA34 (510 aa).

Met-1 is subject to N-acetylmethionine. Residues 1–31 (MEEPQAGDAARFSCPPNFTAKPPASESPRFS) are disordered. Ser-27 is modified (phosphoserine). Tyr-80 bears the Phosphotyrosine mark. Residues 120-143 (GPQQSLSGSPLQPIPASPPPQIPP) form a disordered region. A phosphoserine mark is found at Ser-128, Ser-136, Ser-172, and Ser-205. Pro residues predominate over residues 131–143 (QPIPASPPPQIPP). The tract at residues 203-510 (LGSPEMDVRK…KRKQQQQQPV (308 aa)) is disordered. The segment covering 258–270 (GKETFEPEDKTVK) has biased composition (basic and acidic residues). A Glycyl lysine isopeptide (Lys-Gly) (interchain with G-Cter in SUMO1); alternate cross-link involves residue Lys-270. Lys-270 is covalently cross-linked (Glycyl lysine isopeptide (Lys-Gly) (interchain with G-Cter in SUMO2); alternate). Residue Ser-285 is modified to Phosphoserine. At Thr-287 the chain carries Phosphothreonine. Ser-309 carries the phosphoserine modification. Lys-314 is covalently cross-linked (Glycyl lysine isopeptide (Lys-Gly) (interchain with G-Cter in SUMO1); alternate). Residue Lys-314 forms a Glycyl lysine isopeptide (Lys-Gly) (interchain with G-Cter in SUMO2); alternate linkage. Low complexity-rich tracts occupy residues 372–382 (AKPQAQAALAA) and 394–407 (DATV…VGPE). Over residues 421 to 430 (TKKKKKKKER) the composition is skewed to basic residues. Over residues 436-452 (EPIQPLEPELPGEGQPE) the composition is skewed to low complexity. Position 490 is a phosphoserine (Ser-490).

It belongs to the eukaryotic RPA34 RNA polymerase subunit family. As to quaternary structure, component of the RNA polymerase I (Pol I) complex consisting of 13 subunits: a ten-subunit catalytic core composed of POLR1A/RPA1, POLR1B/RPA2, POLR1C/RPAC1, POLR1D/RPAC2, POLR1H/RPA12, POLR2E/RPABC1, POLR2F/RPABC2, POLR2H/RPABC3, POLR2K/RPABC4 and POLR2L/RPABC5; a mobile stalk subunit POLR1F/RPA43 protruding from the core and additional subunits homologous to general transcription factors POLR1E/RPA49 and POLR1G/RPA34. Forms a heterodimer with POLR1E/RPA49. Part of Pol I pre-initiation complex (PIC), in which Pol I core assembles with RRN3 and promoter-bound UTBF and SL1/TIF-IB complex. Interacts with TAF1A thereby associates with the SL1/TIF-IB complex. Interacts with UBTF. Interacts with POLR1E/PRAF1 through its N-terminal region. Interacts with CD3E. Undergoes tyrosine phosphorylation upon T-cell receptor (TCR) stimulation. This phosphorylation has not been confirmed by other groups. In terms of processing, phosphorylated on tyrosine residues in initiation-competent Pol I-beta complexes but not in Pol I-alpha complexes.

The protein localises to the nucleus. It is found in the nucleolus. The protein resides in the chromosome. Functionally, component of RNA polymerase I (Pol I), a DNA-dependent RNA polymerase which synthesizes ribosomal RNA precursors using the four ribonucleoside triphosphates as substrates. Involved in UBTF-activated transcription, presumably at a step following PIC formation. In terms of biological role, has been described as a component of preformed T-cell receptor (TCR) complex. This Homo sapiens (Human) protein is DNA-directed RNA polymerase I subunit RPA34.